The following is a 211-amino-acid chain: MIYIVGIGPGDREYLTLKAIKIVENADLVVGSKRALELFNIDEDKKITLTKNLIGELKELIKNENIKNKKIAILSTGDPCFSGLLKTLLKIGAKKEDIEAISGISSIQIAAAKLKISWEDYYIITLHGKEENRKKLLNLIKNHEKVIFLPNNLKEDAKFLINNGINPDTKIWVLENLTYENEKISLKSLKEIANGDFSYLTVCVYEGDEEI.

This sequence belongs to the precorrin methyltransferase family.

It catalyses the reaction Co-precorrin-7 + S-adenosyl-L-methionine = Co-precorrin-8X + S-adenosyl-L-homocysteine + H(+). Its pathway is cofactor biosynthesis; adenosylcobalamin biosynthesis; cob(II)yrinate a,c-diamide from sirohydrochlorin (anaerobic route): step 8/10. Its function is as follows. Catalyzes the methylation of C-5 in cobalt-precorrin-7 to form cobalt-precorrin-8. The polypeptide is Probable cobalt-precorrin-7 C(5)-methyltransferase (cbiE) (Methanocaldococcus jannaschii (strain ATCC 43067 / DSM 2661 / JAL-1 / JCM 10045 / NBRC 100440) (Methanococcus jannaschii)).